A 375-amino-acid chain; its full sequence is MAKRDYYEVLGVERGAGEAELKKAYRRLAMKYHPDRNPDDKSAEEKFKEVNEAYEVLSDAGKRMAYDQYGHAGVDQSMGGGAGFGAGGANFSDIFGDVFSDFFGAGRAGARGGPQRGSDLRYTLELNLEEAVRGTTVTIRVPTLVHCKTCDGSGAKKGTTPVTCTTCGGIGQVRMQQGFFSVQQTCPRCHGSGKMIADPCPDCHGQGRVEEHKTLSVKVPAGVDSGDRIRLAGEGEAGTLGGPPGDLYVVVSVREHPIFQRDGKHLYCEVPISFADAALGGELEVPTLDGRVKLKIPEGTQTGKLFRLRGKGVAPVRGGAAGDLMCRVVVETPVNLSKRQRELLEEFRGSLQGNSSHSPKASGWFEGMKRFFDDL.

One can recognise a J domain in the interval 5 to 70 (DYYEVLGVER…GKRMAYDQYG (66 aa)). The CR-type zinc-finger motif lies at 134 to 212 (GTTVTIRVPT…CHGQGRVEEH (79 aa)). 8 residues coordinate Zn(2+): Cys147, Cys150, Cys164, Cys167, Cys186, Cys189, Cys200, and Cys203. CXXCXGXG motif repeat units lie at residues 147–154 (CKTCDGSG), 164–171 (CTTCGGIG), 186–193 (CPRCHGSG), and 200–207 (CPDCHGQG).

It belongs to the DnaJ family. As to quaternary structure, homodimer. Zn(2+) serves as cofactor.

The protein localises to the cytoplasm. Its function is as follows. Participates actively in the response to hyperosmotic and heat shock by preventing the aggregation of stress-denatured proteins and by disaggregating proteins, also in an autonomous, DnaK-independent fashion. Unfolded proteins bind initially to DnaJ; upon interaction with the DnaJ-bound protein, DnaK hydrolyzes its bound ATP, resulting in the formation of a stable complex. GrpE releases ADP from DnaK; ATP binding to DnaK triggers the release of the substrate protein, thus completing the reaction cycle. Several rounds of ATP-dependent interactions between DnaJ, DnaK and GrpE are required for fully efficient folding. Also involved, together with DnaK and GrpE, in the DNA replication of plasmids through activation of initiation proteins. The chain is Chaperone protein DnaJ from Azotobacter vinelandii (strain DJ / ATCC BAA-1303).